The chain runs to 246 residues: 1-(5-phosphoribosyl)-5-[(5-phosphoribosylamino)methylideneamino] imidazole-4-carboxamide isomerase (246 aa).

The Proton acceptor role is filled by Asp-8. Asp-130 (proton donor) is an active-site residue.

It belongs to the HisA/HisF family.

The protein resides in the cytoplasm. The catalysed reaction is 1-(5-phospho-beta-D-ribosyl)-5-[(5-phospho-beta-D-ribosylamino)methylideneamino]imidazole-4-carboxamide = 5-[(5-phospho-1-deoxy-D-ribulos-1-ylimino)methylamino]-1-(5-phospho-beta-D-ribosyl)imidazole-4-carboxamide. It participates in amino-acid biosynthesis; L-histidine biosynthesis; L-histidine from 5-phospho-alpha-D-ribose 1-diphosphate: step 4/9. This Halorhodospira halophila (strain DSM 244 / SL1) (Ectothiorhodospira halophila (strain DSM 244 / SL1)) protein is 1-(5-phosphoribosyl)-5-[(5-phosphoribosylamino)methylideneamino] imidazole-4-carboxamide isomerase.